The chain runs to 477 residues: UDP-N-acetylmuramate--L-alanine ligase (477 aa).

Position 112–118 (112–118) interacts with ATP; the sequence is GAHGKTT.

The protein belongs to the MurCDEF family.

Its subcellular location is the cytoplasm. The catalysed reaction is UDP-N-acetyl-alpha-D-muramate + L-alanine + ATP = UDP-N-acetyl-alpha-D-muramoyl-L-alanine + ADP + phosphate + H(+). It functions in the pathway cell wall biogenesis; peptidoglycan biosynthesis. In terms of biological role, cell wall formation. This is UDP-N-acetylmuramate--L-alanine ligase from Delftia acidovorans (strain DSM 14801 / SPH-1).